Consider the following 1378-residue polypeptide: DNA-directed RNA polymerase subunit beta (1378 aa).

This sequence belongs to the RNA polymerase beta chain family. In terms of assembly, the RNAP catalytic core consists of 2 alpha, 1 beta, 1 beta' and 1 omega subunit. When a sigma factor is associated with the core the holoenzyme is formed, which can initiate transcription.

The catalysed reaction is RNA(n) + a ribonucleoside 5'-triphosphate = RNA(n+1) + diphosphate. In terms of biological role, DNA-dependent RNA polymerase catalyzes the transcription of DNA into RNA using the four ribonucleoside triphosphates as substrates. The sequence is that of DNA-directed RNA polymerase subunit beta from Campylobacter jejuni (strain RM1221).